Consider the following 187-residue polypeptide: Peptidyl-tRNA hydrolase (187 aa).

H14 is a tRNA binding site. The Proton acceptor role is filled by H19. TRNA contacts are provided by Y62, N64, and N110.

The protein belongs to the PTH family. In terms of assembly, monomer.

It is found in the cytoplasm. It catalyses the reaction an N-acyl-L-alpha-aminoacyl-tRNA + H2O = an N-acyl-L-amino acid + a tRNA + H(+). Its function is as follows. Hydrolyzes ribosome-free peptidyl-tRNAs (with 1 or more amino acids incorporated), which drop off the ribosome during protein synthesis, or as a result of ribosome stalling. In terms of biological role, catalyzes the release of premature peptidyl moieties from peptidyl-tRNA molecules trapped in stalled 50S ribosomal subunits, and thus maintains levels of free tRNAs and 50S ribosomes. The protein is Peptidyl-tRNA hydrolase of Chlorobaculum tepidum (strain ATCC 49652 / DSM 12025 / NBRC 103806 / TLS) (Chlorobium tepidum).